We begin with the raw amino-acid sequence, 1188 residues long: Adenomatous polyposis coli protein-related protein 1 (1188 aa).

Residues 1–50 (MSSSSSDENETTIHRTGSNTGGSGIYSQPRAGSSKRTSNVRHDVSDVDDE) are disordered. Residues 1–486 (MSSSSSDENE…LSLRATRASP (486 aa)) form a required for interaction with bar-1 and hmp-2 region. The ARM repeat unit spans residues 314-358 (NCLKVLASLLSPDARFTSLVDSATGILKYVSQYLANTSTHLELRS). The segment covering 579–588 (IQQQQQMQKA) has biased composition (low complexity). 6 disordered regions span residues 579-624 (IQQQ…SMNP), 670-702 (TESE…DGAT), 726-751 (TPNG…GPSL), 778-952 (QSEM…TMRF), 1003-1092 (CSMI…LKDK), and 1157-1181 (YQKP…PNPK). Positions 600–1188 (DLDIPTSTVM…NPKQMLVTIV (589 aa)) are required for interaction with pry-1. 2 stretches are compositionally biased toward polar residues: residues 604–624 (PTST…SMNP) and 677–701 (LTSQ…SDGA). 2 stretches are compositionally biased toward polar residues: residues 778–788 (QSEMPTSSSTP) and 800–811 (FSPTQKTTSSPA). 2 stretches are compositionally biased toward basic and acidic residues: residues 832-843 (RRQDASDADRLL) and 871-900 (EPER…DHNG). Composition is skewed to polar residues over residues 909–929 (WSPQ…SSED), 937–946 (EPNSSTSGAA), 1014–1039 (QRNE…SASS), and 1164–1180 (GRNN…TPNP).

It belongs to the adenomatous polyposis coli (APC) family. In terms of assembly, interacts (via N-terminus) with bar-1 and hmp-2; the interaction with hmp-2 is relatively weak. Interacts (via C-terminus) with pry-1 (via N-terminus). Probably associates with bar-1, gsk-3, pry-1 in a complex. In terms of tissue distribution, during the L1 stage, expressed in vulval precursor cells (P3-8.p), seam cells and excretory cells.

The protein localises to the cell junction. It is found in the adherens junction. The protein resides in the cytoplasm. Its subcellular location is the nucleus. Functionally, has a role in endoderm cell specification and pharyngeal development. Required for the migration of epithelial cells, organization of the anterior seam cells and ceh-13 expression during embryo morphogenesis. Prevents hyperactivation of the Wnt signaling pathway during endoderm development, probably by preventing hmp-2 nuclear translocation. During larval development, apr-1 is required for expression of lin-39 in P3-8.p. Shown to negatively regulate Wnt signaling in vulval precursor cells. Has a role in cell division by establishing the polarity of the mother cell which forms the asymmetries of the daughter nuclei. During the L4 larval stage, it is required for the asymmetric division and self-renewal of seam cells. Thought to regulate export of wrm-1 from the nucleus possibly as part of a complex involving pry-1. In Caenorhabditis elegans, this protein is Adenomatous polyposis coli protein-related protein 1.